Consider the following 317-residue polypeptide: Ribosomal protein L11 methyltransferase (317 aa).

S-adenosyl-L-methionine contacts are provided by Thr-158, Gly-179, Asp-201, and Asn-244.

It belongs to the methyltransferase superfamily. PrmA family.

It is found in the cytoplasm. It carries out the reaction L-lysyl-[protein] + 3 S-adenosyl-L-methionine = N(6),N(6),N(6)-trimethyl-L-lysyl-[protein] + 3 S-adenosyl-L-homocysteine + 3 H(+). In terms of biological role, methylates ribosomal protein L11. In Streptococcus equi subsp. equi (strain 4047), this protein is Ribosomal protein L11 methyltransferase.